The following is a 255-amino-acid chain: Postacrosomal sheath WW domain-binding protein (255 aa).

The GRAM domain maps to 15–87 (LIPNGESLLK…DLITNLTVEQ (73 aa)). 7 tandem repeats follow at residues 139–145 (YGAPPAG), 146–152 (YGAPPAG), 153–159 (YGAPPPG), 160–166 (YGAPPAG), 167–173 (YGAPPPG), 174–180 (YGAPPAG), and 202–208 (YGAPPLG). The interval 139–208 (YGAPPAGYGA…PAGYGAPPLG (70 aa)) is 6 X 7 AA tandem repeat of Y-G-X-P-P-X-G. The PPxY motif signature appears at 171–174 (PPGY). Disordered stretches follow at residues 180–199 (GYGA…RASP) and 204–255 (APPL…ASSS).

May play a role in meiotic resumption and pronuclear formation, mediated by a WW domain-signaling pathway during fertilization. The chain is Postacrosomal sheath WW domain-binding protein (WBP2NL) from Macaca fascicularis (Crab-eating macaque).